The following is a 233-amino-acid chain: Cobalt-containing nitrile hydratase subunit beta (233 aa).

It belongs to the nitrile hydratase subunit beta family. Heterotetramer of two alpha and two beta chains.

It catalyses the reaction an aliphatic primary amide = an aliphatic nitrile + H2O. NHase catalyzes the hydration of various nitrile compounds to the corresponding amides. The polypeptide is Cobalt-containing nitrile hydratase subunit beta (Pseudonocardia thermophila).